A 668-amino-acid polypeptide reads, in one-letter code: MAAVGPPQQQVRMAQQQVWAALEVALRVPCLYIIDAIFNSYYDSSQSRFCIGLQIFLRLLGIVVSSIVLILSQRSLFKFYMYSSAFLLAATSVLVNYYAALHIDFYGAYNTSAFGIELLPRKGPSLWMALIVLQLTFGIGYVTLLQIQSIYSQLMILNILVPIIGLITELPLHIRETVVLMSSLILIFNTVLVLAVKLKWFYYSTRYVYLLVRHMYRIYGLQLLMEDTWKRIRFPDILRVFWLTRITTQATVLMYILRMANETESFFISWDDFWDVICNLIISGCDSTLTVLGMSAVISSIAHYLGLGILAFIGSTEEDDRRLGFVAPVLFFILALQTGLSGLRPEERLIRLSRNMCLLLTAVLHFIHGMTDPVLMSLSASHVSSFHRHFPVLFVSACLFILPVLLSYVLWHHYALNTWLFAVTAFCVELCLKVIVSLTVYTLFMIDGYYNVLWEKLDDYVYFVRSTGNIIEFIFGVVMFGNGAYTMMFESGSKIRACMMCLHAYFNIYLQVKNGWKTFMNRRTAVKKINSLPEIKGSHLQEIDDVCAICYHEFTTSARITPCNHYFHALCLRKWLYIQDTCPMCHQKVYIEDEIKDNSNASNNNGFIAPNENPNPEEALREDAAGSDRELNEDDSTDCDDDAQRERNGGIQHTGAAAAAAEFNDDTD.

Alanine 2 is subject to N-acetylalanine. 11 helical membrane-spanning segments follow: residues 51–71 (IGLQ…VLIL), 85–105 (AFLL…HIDF), 125–145 (SLWM…VTLL), 154–174 (LMIL…PLHI), 178–198 (VVLM…AVKL), 293–313 (GMSA…LAFI), 323–343 (LGFV…LSGL), 356–376 (MCLL…PVLM), 390–410 (FPVL…SYVL), 420–440 (LFAV…SLTV), and 470–490 (IIEF…MMFE). The RING-type; atypical zinc-finger motif lies at 547–586 (CAICYHEFTTSARITPCNHYFHALCLRKWLYIQDTCPMCH). The interval 602 to 668 (SNNNGFIAPN…AAAEFNDDTD (67 aa)) is disordered. Over residues 618 to 630 (EALREDAAGSDRE) the composition is skewed to basic and acidic residues. A compositionally biased stretch (acidic residues) spans 631 to 641 (LNEDDSTDCDD). The residue at position 636 (serine 636) is a Phosphoserine. A phosphothreonine mark is found at threonine 637 and threonine 667.

As to quaternary structure, interacts with VHL. Interacts with MHC class I and HM13. Component of SCAP-SREBP complex composed of SREBF2, SCAP and RNF139; the complex hampers the interaction between SCAP and SEC24B, thereby reducing SREBF2 proteolytic processing. Interacts with SREBF2 (via C-terminal domain). Interacts with SCAP; the interaction inhibits the interaction of SCAP with SEC24B and hampering the ER to Golgi transport of the SCAP-SREBP complex. Interacts with SEC24B. Interacts with INSIG1 and INSIG2. Interacts with EIF3F and EIF3H; the interaction leads to protein translation inhibitions in a ubiquitination-dependent manner. Interacts with XBP1 isoform 1; the interaction induces ubiquitination and degradation of XBP1 isoform 1. Interacts with AUP1, AMFR and UBE2G2; interaction with AUP1 facilitates interaction of RNF139 with ubiquitin-conjugating enzyme UBE2G2 and ubiquitin ligase AMFR/gp78, leading to sterol-induced ubiquitination of HMGCR and its subsequent proteasomal degradation. In terms of processing, autoubiquitinated. Ubiquitination is induced by sterol and leads to ist degradation via the ubiquitin-proteasome pathway.

The protein resides in the endoplasmic reticulum membrane. It catalyses the reaction S-ubiquitinyl-[E2 ubiquitin-conjugating enzyme]-L-cysteine + [acceptor protein]-L-lysine = [E2 ubiquitin-conjugating enzyme]-L-cysteine + N(6)-ubiquitinyl-[acceptor protein]-L-lysine.. The protein operates within protein modification; protein ubiquitination. Its function is as follows. E3-ubiquitin ligase; acts as a negative regulator of cell proliferation through mechanisms involving G2/M arrest and cell death. Required for MHC class I ubiquitination in cells expressing the cytomegalovirus protein US2 before dislocation from the endoplasmic reticulum (ER). Affects SREBP processing by hindering the SREBP-SCAP complex translocation from the ER to the Golgi, thereby reducing SREBF2 target gene expression. Involved in the sterol-accelerated degradation of HMGCR. This is achieved through binding to INSIG1 and/or INSIG2 at the ER membrane. In addition, interaction of RNF139 with AUP1 facilitates interaction of RNF139 with ubiquitin-conjugating enzyme UBE2G2 and ubiquitin ligase AMFR, leading to ubiquitination of HMGCR. The ubiquitinated HMGCR is then released from the ER by the complex into the cytosol for subsequent destruction. Required for INSIG1 ubiquitination. May be required for EIF3 complex ubiquitination. The polypeptide is E3 ubiquitin-protein ligase RNF139 (Mus musculus (Mouse)).